The following is a 100-amino-acid chain: Large ribosomal subunit protein uL23 (100 aa).

This sequence belongs to the universal ribosomal protein uL23 family. Part of the 50S ribosomal subunit. Contacts protein L29, and trigger factor when it is bound to the ribosome.

In terms of biological role, one of the early assembly proteins it binds 23S rRNA. One of the proteins that surrounds the polypeptide exit tunnel on the outside of the ribosome. Forms the main docking site for trigger factor binding to the ribosome. The chain is Large ribosomal subunit protein uL23 from Shewanella pealeana (strain ATCC 700345 / ANG-SQ1).